Here is a 542-residue protein sequence, read N- to C-terminus: Organic anion transporter 3 (542 aa).

Residues 1–9 (MTFSEILDR) lie on the Cytoplasmic side of the membrane. A Phosphoserine modification is found at serine 4. The chain crosses the membrane as a helical span at residues 10–30 (VGSMGHFQFLHVAILGLPILN). Over 31-123 (MANHNLLQIF…LVCNSNKLKE (93 aa)) the chain is Extracellular. 2 N-linked (GlcNAc...) asparagine glycosylation sites follow: asparagine 86 and asparagine 102. The helical transmembrane segment at 124-144 (MAQSIFMAGILIGGLVLGDLS) threads the bilayer. The Cytoplasmic portion of the chain corresponds to 145–154 (DRFGRRPILT). The helical transmembrane segment at 155–175 (CSYLLLAASGSGAAFSPTFPI) threads the bilayer. A topological domain (extracellular) is located at residue tyrosine 176. A helical membrane pass occupies residues 177 to 197 (MVFRFLCGFGISGITLSTVIL). The Cytoplasmic segment spans residues 198-212 (NVEWVPTRMRAIMST). Residues 213-233 (ALGYCYTFGQFILPGLAYAIP) form a helical membrane-spanning segment. Residues 234–236 (QWR) are Extracellular-facing. Residues 237 to 257 (WLQLTVSIPFFVFFLSSWWTP) form a helical membrane-spanning segment. At 258 to 327 (ESIRWLVLSG…FRIPMLRRMT (70 aa)) the chain is on the cytoplasmic side. A helical transmembrane segment spans residues 328–348 (FCLSLAWFATGFAYYSLAMGV). Topologically, residues 349–354 (EEFGVN) are extracellular. Residues 355 to 375 (LYILQIIFGGVDVPAKFITIL) traverse the membrane as a helical segment. Over 376 to 386 (SLSYLGRHTTQ) the chain is Cytoplasmic. A helical membrane pass occupies residues 387–407 (AAALLLAGGAILALTFVPLDL). At 408 to 411 (QTVR) the chain is on the extracellular side. A helical membrane pass occupies residues 412–432 (TVLAVFGKGCLSSSFSCLFLY). The Cytoplasmic segment spans residues 433-471 (TSELYPTVIRQTGMGVSNLWTRVGSMVSPLVKITGEVQP). Residues 472 to 492 (FIPNIIYGITALLGGSAALFL) form a helical membrane-spanning segment. Topologically, residues 493 to 542 (PETLNQPLPETIEDLENWSLRAKKPKQEPEVEKASQRIPLQPHGPGLGSS) are extracellular. The disordered stretch occupies residues 515 to 542 (KKPKQEPEVEKASQRIPLQPHGPGLGSS). Basic and acidic residues predominate over residues 517–527 (PKQEPEVEKAS).

This sequence belongs to the major facilitator (TC 2.A.1) superfamily. Organic cation transporter (TC 2.A.1.19) family. As to expression, strongly expressed in kidney. Weaker expression in brain and skeletal muscle. Expressed in adrenal glands.

It localises to the basolateral cell membrane. The catalysed reaction is estrone 3-sulfate(out) + glutarate(in) = estrone 3-sulfate(in) + glutarate(out). It carries out the reaction estrone 3-sulfate(in) + 2-oxoglutarate(out) = estrone 3-sulfate(out) + 2-oxoglutarate(in). It catalyses the reaction glutarate(in) + 2-oxoglutarate(out) = glutarate(out) + 2-oxoglutarate(in). The enzyme catalyses urate(in) + 2-oxoglutarate(out) = urate(out) + 2-oxoglutarate(in). The catalysed reaction is taurocholate(out) + glutarate(in) = taurocholate(in) + glutarate(out). It carries out the reaction dehydroepiandrosterone 3-sulfate(out) + glutarate(in) = dehydroepiandrosterone 3-sulfate(in) + glutarate(out). It catalyses the reaction prostaglandin F2alpha(out) + glutarate(in) = prostaglandin F2alpha(in) + glutarate(out). The enzyme catalyses prostaglandin F2alpha(out) + 2-oxoglutarate(in) = prostaglandin F2alpha(in) + 2-oxoglutarate(out). The catalysed reaction is (R)-carnitine(out) + 2-oxoglutarate(in) = (R)-carnitine(in) + 2-oxoglutarate(out). It carries out the reaction glutarate(in) + (R)-carnitine(out) = glutarate(out) + (R)-carnitine(in). It catalyses the reaction prostaglandin E2(out) + 2-oxoglutarate(in) = prostaglandin E2(in) + 2-oxoglutarate(out). The enzyme catalyses prostaglandin E2(out) + glutarate(in) = prostaglandin E2(in) + glutarate(out). The catalysed reaction is urate(in) + glutarate(out) = urate(out) + glutarate(in). It carries out the reaction taurocholate(out) + 2-oxoglutarate(in) = taurocholate(in) + 2-oxoglutarate(out). It catalyses the reaction dehydroepiandrosterone 3-sulfate(out) + 2-oxoglutarate(in) = dehydroepiandrosterone 3-sulfate(in) + 2-oxoglutarate(out). The enzyme catalyses kynurenate(out) + a dicarboxylate(in) = kynurenate(in) + a dicarboxylate(out). The catalysed reaction is (indol-3-yl)acetate(out) + a dicarboxylate(in) = (indol-3-yl)acetate(in) + a dicarboxylate(out). It carries out the reaction indoxyl sulfate(out) + a dicarboxylate(in) = indoxyl sulfate(in) + a dicarboxylate(out). It catalyses the reaction N-benzoylglycine(out) + a dicarboxylate(in) = N-benzoylglycine(in) + a dicarboxylate(out). The enzyme catalyses 3-carboxy-4-methyl-5-propyl-2-furanpropanoate(out) + a dicarboxylate(in) = 3-carboxy-4-methyl-5-propyl-2-furanpropanoate(in) + a dicarboxylate(out). The catalysed reaction is (6R)-L-erythro-5,6,7,8-tetrahydrobiopterin(out) + a dicarboxylate(in) = (6R)-L-erythro-5,6,7,8-tetrahydrobiopterin(in) + a dicarboxylate(out). It carries out the reaction L-erythro-7,8-dihydrobiopterin(out) + a dicarboxylate(in) = L-erythro-7,8-dihydrobiopterin(in) + a dicarboxylate(out). It catalyses the reaction L-sepiapterin(out) + a dicarboxylate(in) = L-sepiapterin(in) + a dicarboxylate(out). Functions as an organic anion/dicarboxylate exchanger that couples organic anion uptake indirectly to the sodium gradient. Transports organic anions such as estrone 3-sulfate (E1S) and urate in exchange for dicarboxylates such as glutarate or ketoglutarate (2-oxoglutarate). Plays an important role in the excretion of endogenous and exogenous organic anions, especially from the kidney and the brain. E1S transport is pH- and chloride-dependent and may also involve E1S/cGMP exchange. Responsible for the transport of prostaglandin E2 (PGE2) and prostaglandin F2(alpha) (PGF2(alpha)) in the basolateral side of the renal tubule. Involved in the transport of neuroactive tryptophan metabolites kynurenate and xanthurenate. Functions as a biopterin transporters involved in the uptake and the secretion of coenzymes tetrahydrobiopterin (BH4), dihydrobiopterin (BH2) and sepiapterin to urine, thereby determining baseline levels of blood biopterins. May be involved in the basolateral transport of steviol, a metabolite of the popular sugar substitute stevioside. May participate in the detoxification/ renal excretion of drugs and xenobiotics, such as the histamine H(2)-receptor antagonists fexofenadine and cimetidine, the antibiotic benzylpenicillin (PCG), the anionic herbicide 2,4-dichloro-phenoxyacetate (2,4-D), the diagnostic agent p-aminohippurate (PAH), the antiviral acyclovir (ACV), and the mycotoxin ochratoxin (OTA), by transporting these exogenous organic anions across the cell membrane in exchange for dicarboxylates such as 2-oxoglutarate. Contributes to the renal uptake of potent uremic toxins (indoxyl sulfate (IS), indole acetate (IA), hippurate/N-benzoylglycine (HA) and 3-carboxy-4-methyl-5-propyl-2-furanpropionate (CMPF)), pravastatin, PCG, E1S and dehydroepiandrosterone sulfate (DHEAS), and is partly involved in the renal uptake of temocaprilat (an angiotensin-converting enzyme (ACE) inhibitor). May contribute to the release of cortisol in the adrenals. Involved in one of the detoxification systems on the choroid plexus (CP), removes substrates such as E1S or taurocholate (TC), PCG, 2,4-D and PAH, from the cerebrospinal fluid (CSF) to the blood for eventual excretion in urine and bile. Also contributes to the uptake of several other organic compounds such as the prostanoids prostaglandin E(2) and prostaglandin F(2-alpha), L-carnitine, and the therapeutic drugs allopurinol, 6-mercaptopurine (6-MP) and 5-fluorouracil (5-FU). Mediates the transport of PAH, PCG, and the statins pravastatin and pitavastatin, from the cerebrum into the blood circulation across the blood-brain barrier (BBB). In summary, plays a role in the efflux of drugs and xenobiotics, helping reduce their undesired toxicological effects on the body. The protein is Organic anion transporter 3 of Homo sapiens (Human).